Consider the following 241-residue polypeptide: Probable 2-phosphosulfolactate phosphatase (241 aa).

Belongs to the ComB family. Mg(2+) serves as cofactor.

It catalyses the reaction (2R)-O-phospho-3-sulfolactate + H2O = (2R)-3-sulfolactate + phosphate. The protein is Probable 2-phosphosulfolactate phosphatase of Microcystis aeruginosa (strain NIES-843 / IAM M-2473).